Consider the following 1425-residue polypeptide: Ferlin 1 (1425 aa).

3 C2 domains span residues 1–123, 161–281, and 506–629; these read MAAK…RQWV, VNEG…PRWF, and TKAG…PVWL. Residues 871–952 form a disordered region; the sequence is RPQASRLSRE…ALAASPEEET (82 aa). Basic and acidic residues-rich tracts occupy residues 877 to 889 and 912 to 926; these read LSRE…ERGK and ETEK…KKEG. C2 domains follow at residues 1032–1160 and 1192–1319; these read EMDA…EQMV and RADY…QQHY. Residues 1404 to 1424 form a helical membrane-spanning segment; the sequence is TGVWMTVAGIIALVIFVMFLL.

It belongs to the ferlin family.

The protein resides in the golgi apparatus. It localises to the trans-Golgi network membrane. Its subcellular location is the endosome membrane. It is found in the cytoplasm. Functionally, plays a role in microneme replenishment, probably at the vesicular trafficking level. Directs microneme organelle traffic differentially based on microneme population. Regulates microneme secretion: facilitates microneme membrane fusion with the plasma membrane. The sequence is that of Ferlin 1 from Toxoplasma gondii.